The primary structure comprises 312 residues: Polyamine aminopropyltransferase (312 aa).

A PABS domain is found at 7 to 247 (FFWVQEYFTP…GPLGFALAAQ (241 aa)). Gln36 serves as a coordination point for S-methyl-5'-thioadenosine. The spermidine site is built by His67 and Glu95. Residues Asp115 and 147-148 (DA) each bind S-methyl-5'-thioadenosine. Asp165 acts as the Proton acceptor in catalysis. S-methyl-5'-thioadenosine is bound at residue Pro174.

The protein belongs to the spermidine/spermine synthase family. As to quaternary structure, homodimer or homotetramer.

The protein resides in the cytoplasm. It catalyses the reaction S-adenosyl 3-(methylsulfanyl)propylamine + putrescine = S-methyl-5'-thioadenosine + spermidine + H(+). Its pathway is amine and polyamine biosynthesis; spermidine biosynthesis; spermidine from putrescine: step 1/1. Functionally, catalyzes the irreversible transfer of a propylamine group from the amino donor S-adenosylmethioninamine (decarboxy-AdoMet) to putrescine (1,4-diaminobutane) to yield spermidine. This Synechococcus sp. (strain JA-2-3B'a(2-13)) (Cyanobacteria bacterium Yellowstone B-Prime) protein is Polyamine aminopropyltransferase.